The chain runs to 249 residues: 5'-nucleotidase SurE (249 aa).

A divalent metal cation-binding residues include aspartate 8, aspartate 9, serine 39, and asparagine 91.

Belongs to the SurE nucleotidase family. A divalent metal cation serves as cofactor.

The protein resides in the cytoplasm. It catalyses the reaction a ribonucleoside 5'-phosphate + H2O = a ribonucleoside + phosphate. In terms of biological role, nucleotidase that shows phosphatase activity on nucleoside 5'-monophosphates. The protein is 5'-nucleotidase SurE of Pseudomonas aeruginosa (strain UCBPP-PA14).